The sequence spans 352 residues: Photosystem II D2 protein (352 aa).

The helical transmembrane segment at 40 to 60 (TAYLALGGWLTGTTFVTSWYT) threads the bilayer. Residue His117 coordinates chlorophyll a. Residues 124–140 (GFMLRQFEIARLVGIRP) form a helical membrane-spanning segment. 2 residues coordinate pheophytin a: Gln129 and Asn142. The helical transmembrane segment at 152 to 165 (VFVSVFLIYPLGQS) threads the bilayer. Residue His197 participates in chlorophyll a binding. The chain crosses the membrane as a helical span at residues 207 to 227 (GALLCAIHGATVENTLFEDGE). A plastoquinone contacts are provided by His214 and Phe261. His214 contributes to the Fe cation binding site. His268 is a Fe cation binding site. A helical transmembrane segment spans residues 278 to 294 (GLWTSSIGIIGLALNLR).

The protein belongs to the reaction center PufL/M/PsbA/D family. As to quaternary structure, PSII is composed of 1 copy each of membrane proteins PsbA, PsbB, PsbC, PsbD, PsbE, PsbF, PsbH, PsbI, PsbJ, PsbK, PsbL, PsbM, PsbT, PsbX, PsbY, PsbZ, Psb30/Ycf12, at least 3 peripheral proteins of the oxygen-evolving complex and a large number of cofactors. It forms dimeric complexes. The D1/D2 heterodimer binds P680, chlorophylls that are the primary electron donor of PSII, and subsequent electron acceptors. It shares a non-heme iron and each subunit binds pheophytin, quinone, additional chlorophylls, carotenoids and lipids. There is also a Cl(-1) ion associated with D1 and D2, which is required for oxygen evolution. The PSII complex binds additional chlorophylls, carotenoids and specific lipids. is required as a cofactor.

The protein resides in the plastid. Its subcellular location is the organellar chromatophore thylakoid membrane. It carries out the reaction 2 a plastoquinone + 4 hnu + 2 H2O = 2 a plastoquinol + O2. Its function is as follows. Photosystem II (PSII) is a light-driven water:plastoquinone oxidoreductase that uses light energy to abstract electrons from H(2)O, generating O(2) and a proton gradient subsequently used for ATP formation. It consists of a core antenna complex that captures photons, and an electron transfer chain that converts photonic excitation into a charge separation. The D1/D2 (PsbA/PsbD) reaction center heterodimer binds P680, the primary electron donor of PSII as well as several subsequent electron acceptors. D2 is needed for assembly of a stable PSII complex. The sequence is that of Photosystem II D2 protein from Paulinella chromatophora.